We begin with the raw amino-acid sequence, 161 residues long: TM2 domain-containing protein DDB_G0278163 (161 aa).

The Cytoplasmic portion of the chain corresponds to 1–24 (MGHHHHHHGGSGHHHHHHHHGSGH). Residues 25–45 (YGGGAVLVTPIVTPVPVVYGS) form a helical membrane-spanning segment. Topologically, residues 46–54 (RSSSYCPKS) are extracellular. The TM2 domain occupies 52 to 100 (PKSMTVAYVLWFFFGILGFHRLYLGRVGTFFLYFFTAGVFGLGWLFDAF). The chain crosses the membrane as a helical span at residues 55–75 (MTVAYVLWFFFGILGFHRLYL). Residues 76 to 80 (GRVGT) lie on the Cytoplasmic side of the membrane. A helical membrane pass occupies residues 81 to 101 (FFLYFFTAGVFGLGWLFDAFY). The Extracellular segment spans residues 102–161 (THKMVKHYNECEFTKSCVGQSPPATIPIYQSEGAYPTYQQVPQQPPQFYQPQQQQPQYQP). Residues 139–161 (YQQVPQQPPQFYQPQQQQPQYQP) form a disordered region.

This sequence belongs to the TM2 family.

The protein localises to the membrane. The sequence is that of TM2 domain-containing protein DDB_G0278163 from Dictyostelium discoideum (Social amoeba).